The sequence spans 232 residues: MVQTKRQKAIDLAVVPGKAYGIDEAIKILKTATKAKFIESVDVAIRLGVDVKKSDQQVRGSTLLPAGTGRAVRVAVFVPSGAKAEDALAAGADAVGMDDLAEKMQAGDLNYDVVIATPDAMRVVGKLGTLLGPRGLMPNPKVGTVSQNPGEAVKNAKSGQVRYRADKAGIIHCVIGKVNFDDEALKLNLQALLVDLIKIKPTASKGAYLQKVSLSSTMGPGVMIDQSTLSLK.

It belongs to the universal ribosomal protein uL1 family. In terms of assembly, part of the 50S ribosomal subunit.

Binds directly to 23S rRNA. The L1 stalk is quite mobile in the ribosome, and is involved in E site tRNA release. In terms of biological role, protein L1 is also a translational repressor protein, it controls the translation of the L11 operon by binding to its mRNA. The sequence is that of Large ribosomal subunit protein uL1 from Xylella fastidiosa (strain 9a5c).